Reading from the N-terminus, the 476-residue chain is Arginine biosynthesis bifunctional protein ArgJ, mitochondrial (476 aa).

Substrate is bound by residues Thr193, Lys219, Thr237, Glu337, Asn471, and Ser476. The Nucleophile role is filled by Thr237.

The protein belongs to the ArgJ family. As to quaternary structure, heterodimer of an alpha and a beta chain. Post-translationally, the alpha and beta chains are autoproteolytically processed from a single precursor protein within the mitochondrion.

It is found in the mitochondrion matrix. It catalyses the reaction N(2)-acetyl-L-ornithine + L-glutamate = N-acetyl-L-glutamate + L-ornithine. The catalysed reaction is L-glutamate + acetyl-CoA = N-acetyl-L-glutamate + CoA + H(+). Its pathway is amino-acid biosynthesis; L-arginine biosynthesis; L-ornithine and N-acetyl-L-glutamate from L-glutamate and N(2)-acetyl-L-ornithine (cyclic): step 1/1. The protein operates within amino-acid biosynthesis; L-arginine biosynthesis; N(2)-acetyl-L-ornithine from L-glutamate: step 1/4. Functionally, catalyzes two activities which are involved in the cyclic version of arginine biosynthesis: the synthesis of acetylglutamate from glutamate and acetyl-CoA, and of ornithine by transacetylation between acetylornithine and glutamate. This is Arginine biosynthesis bifunctional protein ArgJ, mitochondrial from Cryptococcus neoformans var. neoformans serotype D (strain JEC21 / ATCC MYA-565) (Filobasidiella neoformans).